Reading from the N-terminus, the 579-residue chain is Isocitrate dehydrogenase kinase/phosphatase (579 aa).

ATP-binding positions include 324-330 (ADGTPGM) and Lys345. Asp380 is an active-site residue.

It belongs to the AceK family.

It localises to the cytoplasm. It carries out the reaction L-seryl-[isocitrate dehydrogenase] + ATP = O-phospho-L-seryl-[isocitrate dehydrogenase] + ADP + H(+). Bifunctional enzyme which can phosphorylate or dephosphorylate isocitrate dehydrogenase (IDH) on a specific serine residue. This is a regulatory mechanism which enables bacteria to bypass the Krebs cycle via the glyoxylate shunt in response to the source of carbon. When bacteria are grown on glucose, IDH is fully active and unphosphorylated, but when grown on acetate or ethanol, the activity of IDH declines drastically concomitant with its phosphorylation. The sequence is that of Isocitrate dehydrogenase kinase/phosphatase from Xanthomonas axonopodis pv. citri (strain 306).